Reading from the N-terminus, the 554-residue chain is Calcium-dependent protein kinase 3 (554 aa).

The segment at 30–55 (KKKSSNKSIKSQHKFEGSKIANKNNE) is disordered. Positions 110 to 365 (NLSEEPLGKG…ASEALKHPWF (256 aa)) constitute a Protein kinase domain. Residues 116–124 (LGKGTYGCV) and lysine 139 each bind ATP. Aspartate 230 serves as the catalytic Proton acceptor. A J domain autoinhibitory motif motif is present at residues 385-393 (NFKNYALLL). The segment at 385–420 (NFKNYALLLKLQKLAMTIIAQQSNDYDLQQLKTVFL) is j domain. A J domain EF-hand interaction motif motif is present at residues 394–403 (KLQKLAMTII). EF-hand domains lie at 410-445 (YDLQ…SGLK), 448-479 (QNFD…DRKH), 480-515 (LSKK…GNKK), and 521-554 (KDVN…KLKY). Ca(2+)-binding residues include aspartate 458, aspartate 460, serine 462, arginine 464, glutamate 469, aspartate 493, aspartate 495, aspartate 497, glutamate 499, glutamate 504, aspartate 534, asparagine 536, aspartate 538, lysine 540, and glutamate 545.

This sequence belongs to the protein kinase superfamily. Ser/Thr protein kinase family. CDPK subfamily. It depends on Mg(2+) as a cofactor.

The protein resides in the cytoplasm. The catalysed reaction is L-seryl-[protein] + ATP = O-phospho-L-seryl-[protein] + ADP + H(+). It carries out the reaction L-threonyl-[protein] + ATP = O-phospho-L-threonyl-[protein] + ADP + H(+). Activated by calcium. Upon calcium binding to the EF-hand domain 2, the C-terminus of the junction domain (J domain) undergoes a conformational change which results in the dissociation of the pseudo-substrate inhibitory motif from the catalytic domain. This, in turn, may facilitate the autophosphorylation of the activation loop at Thr-271, which leads to the kinase activation. Its function is as follows. Calcium-dependent protein kinase which acts as a sensor and effector of intracellular Ca(2+) levels probably in part downstream of cGMP-activated PKG kinase. In the mosquito midgut, regulates the gliding motility of the ookinete which is essential for the ookinete to invade the midgut epithelium. However, another study showed that while required for ookinete invasion of the midgut epithelium, is not required for ookinete gliding motility. The sequence is that of Calcium-dependent protein kinase 3 from Plasmodium berghei (strain Anka).